The primary structure comprises 496 residues: Protein nucleotidyltransferase YdiU (496 aa).

Positions 98, 100, 101, 116, 128, 129, 179, and 186 each coordinate ATP. Asp-259 functions as the Proton acceptor in the catalytic mechanism. Residues Asn-260 and Asp-269 each coordinate Mg(2+). Position 269 (Asp-269) interacts with ATP.

This sequence belongs to the SELO family. It depends on Mg(2+) as a cofactor. Mn(2+) serves as cofactor.

The enzyme catalyses L-seryl-[protein] + ATP = 3-O-(5'-adenylyl)-L-seryl-[protein] + diphosphate. The catalysed reaction is L-threonyl-[protein] + ATP = 3-O-(5'-adenylyl)-L-threonyl-[protein] + diphosphate. It catalyses the reaction L-tyrosyl-[protein] + ATP = O-(5'-adenylyl)-L-tyrosyl-[protein] + diphosphate. It carries out the reaction L-histidyl-[protein] + UTP = N(tele)-(5'-uridylyl)-L-histidyl-[protein] + diphosphate. The enzyme catalyses L-seryl-[protein] + UTP = O-(5'-uridylyl)-L-seryl-[protein] + diphosphate. The catalysed reaction is L-tyrosyl-[protein] + UTP = O-(5'-uridylyl)-L-tyrosyl-[protein] + diphosphate. In terms of biological role, nucleotidyltransferase involved in the post-translational modification of proteins. It can catalyze the addition of adenosine monophosphate (AMP) or uridine monophosphate (UMP) to a protein, resulting in modifications known as AMPylation and UMPylation. This chain is Protein nucleotidyltransferase YdiU, found in Albidiferax ferrireducens (strain ATCC BAA-621 / DSM 15236 / T118) (Rhodoferax ferrireducens).